Reading from the N-terminus, the 1292-residue chain is Zinc finger protein 423 (1292 aa).

Over residues 1–11 (MSRRKQAKPRS) the composition is skewed to basic residues. 3 disordered regions span residues 1–21 (MSRR…EASD), 33–70 (AGGL…EDVE), and 95–125 (AHRC…SPTQ). Basic and acidic residues predominate over residues 41 to 54 (ECDRKTSRALEDRN). 2 positions are modified to phosphoserine: serine 55 and serine 58. The C2H2-type 1; degenerate zinc finger occupies 75–101 (YTCDHCQQDFESLADLTDHRAHRCPGD). The segment covering 110 to 125 (WVASSPSSKDVASPTQ) has biased composition (polar residues). 7 C2H2-type zinc fingers span residues 146–168 (YPCQ…EQIH), 174–196 (FKCT…IKLH), 202–224 (YHCH…LKTH), 230–252 (FKCS…MQAH), 271–294 (FMCD…LTLH), 303–326 (LQCI…HQAH), and 331–353 (HKCP…LDSH). The segment at 354–407 (RQPDSSNHSVSPDPVLGSVASMSSATPDSSASVERGSTPDSTLKPLRGQKKMRD) is disordered. Positions 371–385 (SVASMSSATPDSSAS) are enriched in low complexity. The C2H2-type 9; degenerate zinc finger occupies 417-441 (YSCPYCSKRDFTSLAVLEIHLKTIH). 3 C2H2-type zinc fingers span residues 449–472 (HTCQ…RKLH), 488–511 (FHCN…RVSH), and 525–548 (FFCN…QQAH). The segment at 571 to 596 (YSCPYCTNSPIFGSILKLTKHIKENH) adopts a C2H2-type 13; atypical zinc-finger fold. Positions 598 to 635 (NIPLAHSKKSKAEQSPVSSDVEVSSPKRQRLSGSANSI) are disordered. Serine 612 carries the phosphoserine modification. Positions 612-623 (SPVSSDVEVSSP) are enriched in low complexity. 7 C2H2-type zinc fingers span residues 640–662 (YPCN…LKLH), 670–692 (QACP…LTVH), 700–723 (YVCE…LDMH), 728–751 (YHCT…AVKH), 758–781 (YRCT…KHSH), 789–811 (HKCI…ITTH), and 815–838 (YNCR…REKH). The C2H2-type 21; degenerate zinc-finger motif lies at 894–916 (YGCDICGAAYTMEVLLQNHRLRD). 3 consecutive C2H2-type zinc fingers follow at residues 938-960 (HKCN…LQTH), 967-989 (YMCP…KVTH), and 1028-1050 (FRCV…GTFH). Position 1062 is a phosphoserine (serine 1062). A C2H2-type 25; degenerate zinc finger spans residues 1072 to 1090 (YKCALCLKEFRSKQDLVRL). 5 C2H2-type zinc fingers span residues 1128–1151 (LRCP…QVDH), 1176–1198 (YQCI…VANH), 1206–1228 (HECK…LIEH), 1237–1260 (FKCP…FAVH), and 1267–1290 (YDCS…MSQH). Residues 1144–1155 (ESHMQVDHRDLT) are compositionally biased toward basic and acidic residues. The disordered stretch occupies residues 1144–1171 (ESHMQVDHRDLTPETSGPRKGAQTSPVP).

This sequence belongs to the krueppel C2H2-type zinc-finger protein family. In terms of assembly, homodimer. Interacts with SMAD1 and SMAD4. Interacts with EBF1. Interacts with PARP1. Interacts with CEP290. Within the cerebellum, Zfp423 is expressed in both ventricular and external germinal zones. Transiently expressed in newly differentiating olfactory-receptor neurons.

Its subcellular location is the nucleus. Functionally, transcription factor that can both act as an activator or a repressor depending on the context. Plays a central role in BMP signaling and olfactory neurogenesis. Associates with SMADs in response to BMP2 leading to activate transcription of BMP target genes. Acts as a transcriptional repressor via its interaction with EBF1, a transcription factor involved in terminal olfactory receptor neurons differentiation; this interaction preventing EBF1 to bind DNA and activate olfactory-specific genes. Involved in olfactory neurogenesis by participating in a developmental switch that regulates the transition from differentiation to maturation in olfactory receptor neurons. Controls proliferation and differentiation of neural precursors in cerebellar vermis formation. The protein is Zinc finger protein 423 (Znf423) of Mus musculus (Mouse).